The primary structure comprises 303 residues: Acetaldehyde dehydrogenase 1 (303 aa).

Cysteine 130 acts as the Acyl-thioester intermediate in catalysis. NAD(+)-binding positions include 161-169 and asparagine 272; that span reads SVGPGTRKN.

Belongs to the acetaldehyde dehydrogenase family.

It catalyses the reaction acetaldehyde + NAD(+) + CoA = acetyl-CoA + NADH + H(+). This Cupriavidus metallidurans (strain ATCC 43123 / DSM 2839 / NBRC 102507 / CH34) (Ralstonia metallidurans) protein is Acetaldehyde dehydrogenase 1.